A 575-amino-acid chain; its full sequence is Sodium/calcium exchanger NCL2 (575 aa).

3 consecutive transmembrane segments (helical) span residues 69–89, 112–132, and 146–166; these read FLPCTTTAWGNLFLVLAYGFL, IVGGLFLPILGALPDALLILV, and VLIGMGLLAGSTVMLLTLLWG. The N-linked (GlcNAc...) asparagine glycan is linked to asparagine 179. 2 consecutive transmembrane segments (helical) span residues 210–230 and 237–257; these read IMAISILPFIIVQIPKIFKLH and VLIGLIVAALLLLSYCLYQVF. EF-hand domains are found at residues 297–332 and 337–372; these read PNVSVIEKLFHRIDQDNDGKLERGELQAFIVGINFE and NSNLAADQVMADFDTSRNHFIEKGEFVNGMLRWLDE. An N-linked (GlcNAc...) asparagine glycan is attached at asparagine 298. Positions 310, 312, 314, 316, 321, 350, 352, 354, and 361 each coordinate Ca(2+). Helical transmembrane passes span 417–437, 457–477, 494–514, 522–542, and 548–568; these read WTCIKAILLLLLGTAMAAASA, FISFIVMPLATNSSEAVSAII, VYGGVTMNNTLCLAVFLALVY, FSSEVLIILLVCIIMGLFTSF, and LWTCFVAFLLYPLSLIMVYIL.

Belongs to the Ca(2+):cation antiporter (CaCA) (TC 2.A.19) family.

Its subcellular location is the cell membrane. In terms of biological role, may function as a sodium/calcium exchanger (NCX) and participate in the maintenance of calcium homeostasis. May play a role abiotic stress responses. The polypeptide is Sodium/calcium exchanger NCL2 (Oryza sativa subsp. japonica (Rice)).